Consider the following 204-residue polypeptide: NADH-quinone oxidoreductase subunit C (204 aa).

The protein belongs to the complex I 30 kDa subunit family. NDH-1 is composed of 14 different subunits. Subunits NuoB, C, D, E, F, and G constitute the peripheral sector of the complex.

Its subcellular location is the cell inner membrane. The enzyme catalyses a quinone + NADH + 5 H(+)(in) = a quinol + NAD(+) + 4 H(+)(out). NDH-1 shuttles electrons from NADH, via FMN and iron-sulfur (Fe-S) centers, to quinones in the respiratory chain. The immediate electron acceptor for the enzyme in this species is believed to be ubiquinone. Couples the redox reaction to proton translocation (for every two electrons transferred, four hydrogen ions are translocated across the cytoplasmic membrane), and thus conserves the redox energy in a proton gradient. The protein is NADH-quinone oxidoreductase subunit C of Polaromonas naphthalenivorans (strain CJ2).